A 176-amino-acid polypeptide reads, in one-letter code: Sigma intracellular receptor 2 (176 aa).

The Cytoplasmic portion of the chain corresponds to 1–9; it reads MGTLGARRG. Residues 10–30 traverse the membrane as a helical segment; it reads LEWFLGFYFLSHIPITLLMDL. The EXPERA domain occupies 10 to 158; the sequence is LEWFLGFYFL…PYFLIPLILL (149 aa). Over 31 to 68 the chain is Lumenal; the sequence is QGVLPRDLYPVELRNLQQWYIEEFKDPLLQTPPAWFKS. Residues 69 to 89 form a helical membrane-spanning segment; the sequence is FLFCELVFQLPFFPIAAYAFF. Valine 75 and glutamine 77 together coordinate cholesterol. Residues 90–99 are Cytoplasmic-facing; it reads KGGCKWIRTP. The chain crosses the membrane as a helical span at residues 100 to 120; the sequence is AIIYSVHTMTTLIPILSTLLL. Residues 121–141 are Lumenal-facing; sequence DDFSKASHFRGQGPKTFQERL. A helical transmembrane segment spans residues 142–162; the sequence is FLISVYIPYFLIPLILLLFMV. Residues 163–176 lie on the Cytoplasmic side of the membrane; it reads RNPYYKSEEKRKKK. The short motif at 172–176 is the ER retention motif element; that stretch reads KRKKK.

Belongs to the TMEM97/sigma-2 receptor family. In terms of assembly, homodimer. Interacts with NPC1; the interaction impairs NPC1-mediated cholesterol transport. Interacts with PGRMC1 and LDLR; the interaction increases LDL internalization. Interacts with histatin 1/HTN1; the interaction induces HTN1-stimulating wound healing. Interacts with TSPO.

It localises to the rough endoplasmic reticulum membrane. Its subcellular location is the nucleus membrane. In terms of biological role, sigma-2 receptor which contributes to ameliorate dysfunctional cellular processes and slow degenerative progression by regulating cell functions including cholesterol biosynthesis/trafficking, membrane trafficking, autophagy, lipid membrane-bound protein trafficking, and receptor stabilization at the cell surface. Forms a ternary complex with PGRMC1 receptor and low density lipoprotein receptor/LDLR at the plasma membrane, which increases LDLR-mediated LDL cholesterol internalization. Decreases lysosomal sterol transporter NPC1 availability to the cell, probably through NPC1-binding, hence controlling lipid transport, including cholesterol and LBPA, outside of late endosome/lysosome. Binds regio- and stereoselective ligand 20(S)-hydroxycholesterol (20(S)-OHC) which enhances TMEM97-NPC1 interaction and decreases TMEM97-PGRMC1 and TMEM97-TSPO interactions, thereby linking OHC binding to cholesterol homeostasis. Also able to bind cholesterol. Binds histatin 1 (Hst 1)/HN1 salivary peptide at the ER membrane, which is critical for increasing mitochondria-ER contacts and stimulating Hst1 wound healing properties. May alter the activity of some cytochrome P450 proteins. Although shows homologies with sterol isomerases (EXPERA domain), not able to catalyze sterol isomerization. However, may act as sensors of these molecules. Acts as a quality control factor in the ER, promoting the proteolytic degradation of nonproductive and extramitochondrial precursor proteins in the ER membrane thus removing them from the ER surface. In Bos taurus (Bovine), this protein is Sigma intracellular receptor 2 (TMEM97).